The following is a 154-amino-acid chain: 3-dehydroquinate dehydratase (154 aa).

Tyrosine 23 acts as the Proton acceptor in catalysis. Residues asparagine 75, histidine 81, and aspartate 88 each coordinate substrate. Residue histidine 101 is the Proton donor of the active site. Substrate-binding positions include 102–103 (LS) and arginine 112.

This sequence belongs to the type-II 3-dehydroquinase family. Homododecamer.

It carries out the reaction 3-dehydroquinate = 3-dehydroshikimate + H2O. It functions in the pathway metabolic intermediate biosynthesis; chorismate biosynthesis; chorismate from D-erythrose 4-phosphate and phosphoenolpyruvate: step 3/7. In terms of biological role, catalyzes a trans-dehydration via an enolate intermediate. The chain is 3-dehydroquinate dehydratase from Teredinibacter turnerae (strain ATCC 39867 / T7901).